Reading from the N-terminus, the 213-residue chain is Orotate phosphoribosyltransferase (213 aa).

K26 lines the 5-phospho-alpha-D-ribose 1-diphosphate pocket. 34–35 (FF) provides a ligand contact to orotate. 5-phospho-alpha-D-ribose 1-diphosphate-binding positions include 72 to 73 (YK), R99, K100, K103, H105, and 124 to 132 (DDVITAGTA). Orotate is bound by residues T128 and R156.

It belongs to the purine/pyrimidine phosphoribosyltransferase family. PyrE subfamily. In terms of assembly, homodimer. It depends on Mg(2+) as a cofactor.

The catalysed reaction is orotidine 5'-phosphate + diphosphate = orotate + 5-phospho-alpha-D-ribose 1-diphosphate. Its pathway is pyrimidine metabolism; UMP biosynthesis via de novo pathway; UMP from orotate: step 1/2. Catalyzes the transfer of a ribosyl phosphate group from 5-phosphoribose 1-diphosphate to orotate, leading to the formation of orotidine monophosphate (OMP). In Photobacterium profundum (strain SS9), this protein is Orotate phosphoribosyltransferase.